The primary structure comprises 98 residues: MSLTYFNVMLAFTMSFLGLLMYRSHLMSSLLCLEGLMLSLFVLVTITILITHSTLNSMLPIILLVFAACEAALGLSLLVAVSNTYGLDHVQNLNLLKC.

3 helical membrane passes run Met1–Met21, Leu30–Ile50, and Ile61–Val81.

The protein belongs to the complex I subunit 4L family. In terms of assembly, core subunit of respiratory chain NADH dehydrogenase (Complex I) which is composed of 45 different subunits.

The protein localises to the mitochondrion inner membrane. The catalysed reaction is a ubiquinone + NADH + 5 H(+)(in) = a ubiquinol + NAD(+) + 4 H(+)(out). In terms of biological role, core subunit of the mitochondrial membrane respiratory chain NADH dehydrogenase (Complex I) which catalyzes electron transfer from NADH through the respiratory chain, using ubiquinone as an electron acceptor. Part of the enzyme membrane arm which is embedded in the lipid bilayer and involved in proton translocation. The protein is NADH-ubiquinone oxidoreductase chain 4L (MT-ND4L) of Pipistrellus abramus (Japanese pipistrelle).